Consider the following 115-residue polypeptide: Large ribosomal subunit protein bL20 (115 aa).

Belongs to the bacterial ribosomal protein bL20 family.

Its function is as follows. Binds directly to 23S ribosomal RNA and is necessary for the in vitro assembly process of the 50S ribosomal subunit. It is not involved in the protein synthesizing functions of that subunit. The sequence is that of Large ribosomal subunit protein bL20 from Synechococcus sp. (strain CC9902).